The sequence spans 175 residues: RNA pyrophosphohydrolase (175 aa).

Residues 6 to 149 (GYRPNVGIVI…KRDVYRRVMK (144 aa)) enclose the Nudix hydrolase domain. Positions 38-59 (GGINPGETPEQAMYRELFEEVG) match the Nudix box motif.

The protein belongs to the Nudix hydrolase family. RppH subfamily. Requires a divalent metal cation as cofactor.

In terms of biological role, accelerates the degradation of transcripts by removing pyrophosphate from the 5'-end of triphosphorylated RNA, leading to a more labile monophosphorylated state that can stimulate subsequent ribonuclease cleavage. This chain is RNA pyrophosphohydrolase, found in Yersinia pseudotuberculosis serotype O:1b (strain IP 31758).